We begin with the raw amino-acid sequence, 218 residues long: Small ribosomal subunit protein uS3c (218 aa).

The 72-residue stretch at 47–118 (VQKNIRISSG…KLNIAITRIS (72 aa)) folds into the KH type-2 domain.

It belongs to the universal ribosomal protein uS3 family. Part of the 30S ribosomal subunit.

It is found in the plastid. Its subcellular location is the chloroplast. The polypeptide is Small ribosomal subunit protein uS3c (rps3) (Aethionema cordifolium (Lebanon stonecress)).